A 321-amino-acid polypeptide reads, in one-letter code: Probable 3-hydroxyisobutyrate dehydrogenase, mitochondrial (321 aa).

Residues 23-52, 86-87, and T117 contribute to the NAD(+) site; these read KTVG…IVFD and LP. The active site involves K192. K267 is a binding site for NAD(+).

Belongs to the HIBADH-related family. 3-hydroxyisobutyrate dehydrogenase subfamily.

It is found in the mitochondrion. It carries out the reaction 3-hydroxy-2-methylpropanoate + NAD(+) = 2-methyl-3-oxopropanoate + NADH + H(+). It participates in amino-acid degradation; L-valine degradation. This is Probable 3-hydroxyisobutyrate dehydrogenase, mitochondrial (hibA) from Dictyostelium discoideum (Social amoeba).